Consider the following 375-residue polypeptide: Trichodiene synthase (375 aa).

This sequence belongs to the trichodiene synthase family.

The enzyme catalyses (2E,6E)-farnesyl diphosphate = trichodiene + diphosphate. Its pathway is sesquiterpene biosynthesis; trichothecene biosynthesis. Its function is as follows. TS is a member of the terpene cyclase group of enzymes. It catalyzes the isomerization and cyclization of farnesyl pyro-phosphate to form trichodiene, the first cyclic intermediate in the biosynthetic pathway for trichothecenes. It serves to branch trichothecene biosynthesis from the isoprenoid pathway. The sequence is that of Trichodiene synthase (TRI5) from Fusarium cortaderiae.